We begin with the raw amino-acid sequence, 202 residues long: Small ribosomal subunit protein uS5 (202 aa).

One can recognise an S5 DRBM domain in the interval 42–105 (LKDEVLKIMP…ILAKLSIVPV (64 aa)). The residue at position 192 (Thr192) is a Phosphothreonine.

Belongs to the universal ribosomal protein uS5 family. As to quaternary structure, component of the small ribosomal subunit. Interacts with zinc finger protein ZNF277 (via zinc-finger domains); the interaction is direct; the interaction is extra-ribosomal. Interaction with ZNF277 competes with the binding of RPS2 to protein arginine methyltransferase PRMT3. Citrullinated by PADI4 in the Arg/Gly-rich region. Post-translationally, asymmetric arginine dimethylation by PRMT3 occurs at multiple sites in the Arg/Gly-rich region. In terms of processing, monoubiquitinated by RNF10 when a ribosome has stalled during translation, leading to its degradation by the proteasome. Deubiquitinated by USP10, preventing degradation by the proteasome and promoting 40S ribosome subunit recycling following ribosome dissociation.

The protein localises to the cytoplasm. The protein resides in the nucleus. It is found in the nucleolus. Component of the ribosome, a large ribonucleoprotein complex responsible for the synthesis of proteins in the cell. The small ribosomal subunit (SSU) binds messenger RNAs (mRNAs) and translates the encoded message by selecting cognate aminoacyl-transfer RNA (tRNA) molecules. The large subunit (LSU) contains the ribosomal catalytic site termed the peptidyl transferase center (PTC), which catalyzes the formation of peptide bonds, thereby polymerizing the amino acids delivered by tRNAs into a polypeptide chain. The nascent polypeptides leave the ribosome through a tunnel in the LSU and interact with protein factors that function in enzymatic processing, targeting, and the membrane insertion of nascent chains at the exit of the ribosomal tunnel. Plays a role in the assembly and function of the 40S ribosomal subunit. Mutations in this protein affects the control of translational fidelity. Involved in nucleolar processing of pre-18S ribosomal RNA and ribosome assembly. This is Small ribosomal subunit protein uS5 (RPS2) from Cricetulus griseus (Chinese hamster).